A 120-amino-acid chain; its full sequence is Ribosome-binding factor A (120 aa).

This sequence belongs to the RbfA family. As to quaternary structure, monomer. Binds 30S ribosomal subunits, but not 50S ribosomal subunits or 70S ribosomes.

Its subcellular location is the cytoplasm. In terms of biological role, one of several proteins that assist in the late maturation steps of the functional core of the 30S ribosomal subunit. Associates with free 30S ribosomal subunits (but not with 30S subunits that are part of 70S ribosomes or polysomes). Required for efficient processing of 16S rRNA. May interact with the 5'-terminal helix region of 16S rRNA. This Clostridium botulinum (strain Loch Maree / Type A3) protein is Ribosome-binding factor A.